The primary structure comprises 163 residues: Large ribosomal subunit protein uL10 (163 aa).

This sequence belongs to the universal ribosomal protein uL10 family. Part of the ribosomal stalk of the 50S ribosomal subunit. The N-terminus interacts with L11 and the large rRNA to form the base of the stalk. The C-terminus forms an elongated spine to which L12 dimers bind in a sequential fashion forming a multimeric L10(L12)X complex.

Functionally, forms part of the ribosomal stalk, playing a central role in the interaction of the ribosome with GTP-bound translation factors. In Blochmanniella pennsylvanica (strain BPEN), this protein is Large ribosomal subunit protein uL10.